Here is a 155-residue protein sequence, read N- to C-terminus: Ciliary microtubule inner protein 2C (155 aa).

It belongs to the CIMIP2 family.

It localises to the cytoplasm. Its subcellular location is the cytoskeleton. It is found in the cilium axoneme. Microtubule inner protein (MIP) part of the dynein-decorated doublet microtubules (DMTs) in cilia axoneme, which is required for motile cilia beating. The chain is Ciliary microtubule inner protein 2C (cimip2c) from Xenopus tropicalis (Western clawed frog).